The sequence spans 2432 residues: uncharacterized protein (2432 aa).

It belongs to the IIV-6 261R/396L/443R family.

This is an uncharacterized protein from Invertebrate iridescent virus 6 (IIV-6).